Reading from the N-terminus, the 157-residue chain is Endoribonuclease YbeY (157 aa).

Residues His116, His120, and His126 each coordinate Zn(2+).

It belongs to the endoribonuclease YbeY family. Zn(2+) is required as a cofactor.

The protein resides in the cytoplasm. Its function is as follows. Single strand-specific metallo-endoribonuclease involved in late-stage 70S ribosome quality control and in maturation of the 3' terminus of the 16S rRNA. This chain is Endoribonuclease YbeY, found in Blochmanniella pennsylvanica (strain BPEN).